Here is a 79-residue protein sequence, read N- to C-terminus: Acyl carrier protein (79 aa).

Residues 3 to 78 (QEILEKVCSI…DAVKFIEEKK (76 aa)) enclose the Carrier domain. At Ser-38 the chain carries O-(pantetheine 4'-phosphoryl)serine.

Belongs to the acyl carrier protein (ACP) family. 4'-phosphopantetheine is transferred from CoA to a specific serine of apo-ACP by AcpS. This modification is essential for activity because fatty acids are bound in thioester linkage to the sulfhydryl of the prosthetic group.

Its subcellular location is the cytoplasm. It participates in lipid metabolism; fatty acid biosynthesis. In terms of biological role, carrier of the growing fatty acid chain in fatty acid biosynthesis. The sequence is that of Acyl carrier protein from Prochlorococcus marinus (strain MIT 9301).